Consider the following 156-residue polypeptide: Transcription elongation factor GreA (156 aa).

Positions 1–32 form a coiled coil; sequence MKKVRLTREGYEKLKKELEDLKRKFMYEISER.

Belongs to the GreA/GreB family.

In terms of biological role, necessary for efficient RNA polymerase transcription elongation past template-encoded arresting sites. The arresting sites in DNA have the property of trapping a certain fraction of elongating RNA polymerases that pass through, resulting in locked ternary complexes. Cleavage of the nascent transcript by cleavage factors such as GreA or GreB allows the resumption of elongation from the new 3'terminus. GreA releases sequences of 2 to 3 nucleotides. This is Transcription elongation factor GreA from Thermotoga sp. (strain RQ2).